Consider the following 348-residue polypeptide: Fe(3+) ions import ATP-binding protein FbpC (348 aa).

An ABC transporter domain is found at 6 to 236 (LSLEGATVRF…PADAFVARFL (231 aa)). Residue 38–45 (GPSGSGKS) coordinates ATP.

The protein belongs to the ABC transporter superfamily. Fe(3+) ion importer (TC 3.A.1.10) family. As to quaternary structure, the complex is composed of two ATP-binding proteins (FbpC), two transmembrane proteins (FbpB) and a solute-binding protein (FbpA).

The protein localises to the cell membrane. The catalysed reaction is Fe(3+)(out) + ATP + H2O = Fe(3+)(in) + ADP + phosphate + H(+). In terms of biological role, part of the ABC transporter complex FbpABC involved in Fe(3+) ions import. Responsible for energy coupling to the transport system. The protein is Fe(3+) ions import ATP-binding protein FbpC of Streptomyces coelicolor (strain ATCC BAA-471 / A3(2) / M145).